A 703-amino-acid chain; its full sequence is Protein teflon (703 aa).

The C2H2-type 1 zinc-finger motif lies at M32–H55. Disordered stretches follow at residues S78–S111, E140–P161, N205–L239, and S339–E434. The span at Q84 to D94 shows a compositional bias: polar residues. A compositionally biased stretch (basic and acidic residues) spans P148–P161. 2 stretches are compositionally biased toward polar residues: residues S339–V352 and S364–I373. C2H2-type zinc fingers lie at residues Y649–H672 and F677–H700.

This sequence belongs to the Teflon family.

Its subcellular location is the nucleus. The protein resides in the chromosome. Its function is as follows. Specifically required in males for proper segregation of autosomal bivalents at meiosis I. Expression is required in the male germ line prior to spermatocyte stage S4. May have a role as a bridging molecule maintaining adhesion to hold autosome bivalents together via heterochromatic connections. In Drosophila persimilis (Fruit fly), this protein is Protein teflon.